The following is a 482-amino-acid chain: Lipoamide acyltransferase component of branched-chain alpha-keto acid dehydrogenase complex, mitochondrial (482 aa).

Residues 1-61 (MAAVRMLRTW…HFLKTTAALR (61 aa)) constitute a mitochondrion transit peptide. The Lipoyl-binding domain occupies 64-139 (VVQFKLSDIG…YVGKPLVDIE (76 aa)). Lys105 is modified (N6-lipoyllysine). At Lys133 the chain carries N6-succinyllysine. The tract at residues 145 to 160 (DSEEDVVETPAVSHDE) is critical for association with PPM1K. The segment at 147–168 (EEDVVETPAVSHDEHTHQEIKG) is disordered. Residues 157-168 (SHDEHTHQEIKG) are compositionally biased toward basic and acidic residues. In terms of domain architecture, Peripheral subunit-binding (PSBD) spans 172–209 (LATPAVRRLAMENNIKLSEVVGSGKDGRILKEDILNYL). Lys196 bears the N6-acetyllysine; alternate mark. N6-succinyllysine; alternate is present on Lys196. The residue at position 202 (Lys202) is an N6-acetyllysine. Residue Ser220 is modified to Phosphoserine. N6-acetyllysine occurs at positions 243 and 250. Lys261 carries the post-translational modification N6-succinyllysine. At Lys289 the chain carries N6-acetyllysine; alternate. Position 289 is an N6-succinyllysine; alternate (Lys289). Arg291 contacts CoA. Residues Lys295 and Lys304 each carry the N6-acetyllysine modification. 8 residues coordinate CoA: Ser306, Asp349, Gln378, Ser399, Asn400, Ser403, Gly424, and Ile426. N6-acetyllysine is present on Lys435. Residue Lys440 is modified to N6-acetyllysine; alternate. N6-succinyllysine; alternate is present on Lys440. Active-site residues include His452 and Asp456.

Belongs to the 2-oxoacid dehydrogenase family. Forms a 24-polypeptide structural core with octahedral symmetry that represents the E2 component of the branched-chain alpha-ketoacid dehydrogenase (BCKDH) complex. The BCKDH complex is composed of three major building blocks E1, E2 and E3. It is organized around E2, a 24-meric cubic core composed of DBT, to which are associated 6 to 12 copies of E1, and approximately 6 copies of the dehydrogenase E3, a DLD dimer. Interacts with PPM1K with a 24:1 stoichiometry; the N-terminal region (residues 49-61) of PPM1K and C-terminal linker of the lipoyl domain of DBT/E2 (residues 145-160) are critical for this interaction whereas the lipoyl prosthetic group is dispensable. This interaction requires colocalization in mitochondria. PPM1K competes with BCKDK for binding to DBT; this interaction is modulated by branched-chain alpha-keto acids (BCKAs). At steady state, BCKDH holoenzyme preferentially binds BCKDK and BCKDHA is phosphorylated. In response to high levels of BCKAs, BCKDK is replaced by PPM1K leading to BCKDHA dephosphorylation. (R)-lipoate is required as a cofactor.

It is found in the mitochondrion matrix. It carries out the reaction N(6)-[(R)-dihydrolipoyl]-L-lysyl-[protein] + 2-methylpropanoyl-CoA = N(6)-[(R)-S(8)-2-methylpropanoyldihydrolipoyl]-L-lysyl-[protein] + CoA. Its function is as follows. The branched-chain alpha-keto dehydrogenase complex catalyzes the overall conversion of alpha-keto acids to acyl-CoA and CO(2). It contains multiple copies of three enzymatic components: branched-chain alpha-keto acid decarboxylase (E1), lipoamide acyltransferase (E2) and lipoamide dehydrogenase (E3). Within this complex, the catalytic function of this enzyme is to accept, and to transfer to coenzyme A, acyl groups that are generated by the branched-chain alpha-keto acid decarboxylase component. This is Lipoamide acyltransferase component of branched-chain alpha-keto acid dehydrogenase complex, mitochondrial from Homo sapiens (Human).